The following is a 167-amino-acid chain: Peroxiredoxin Pen c 3 (167 aa).

Residues 3-167 (LKAGDSFPEG…SRADHVLKQL (165 aa)) enclose the Thioredoxin domain. Cysteine 60 (cysteine sulfenic acid (-SOH) intermediate) is an active-site residue.

The protein belongs to the peroxiredoxin family. Prx5 subfamily. As to quaternary structure, homodimer; disulfide-linked, upon oxidation.

It carries out the reaction a hydroperoxide + [thioredoxin]-dithiol = an alcohol + [thioredoxin]-disulfide + H2O. In terms of biological role, thiol-specific peroxidase that catalyzes the reduction of hydrogen peroxide and organic hydroperoxides to water and alcohols, respectively. Plays a role in cell protection against oxidative stress by detoxifying peroxides and as sensor of hydrogen peroxide-mediated signaling events. This chain is Peroxiredoxin Pen c 3, found in Penicillium citrinum.